The chain runs to 609 residues: Threonine--tRNA ligase (609 aa).

Residues 1 to 143 (MRVLYLHTER…SFKPGDSRAE (143 aa)) form an editing domain region. 2 catalytic regions span residues 195–491 (PRYL…PRLP) and 196–491 (RYLE…PRLP). Residues cysteine 288, histidine 339, and histidine 460 each contribute to the Zn(2+) site.

Belongs to the class-II aminoacyl-tRNA synthetase family. As to quaternary structure, homodimer. It depends on Zn(2+) as a cofactor.

The protein resides in the cytoplasm. It carries out the reaction tRNA(Thr) + L-threonine + ATP = L-threonyl-tRNA(Thr) + AMP + diphosphate + H(+). In terms of biological role, catalyzes the attachment of threonine to tRNA(Thr) in a two-step reaction: L-threonine is first activated by ATP to form Thr-AMP and then transferred to the acceptor end of tRNA(Thr). Also edits incorrectly charged L-seryl-tRNA(Thr). The protein is Threonine--tRNA ligase of Pyrobaculum neutrophilum (strain DSM 2338 / JCM 9278 / NBRC 100436 / V24Sta) (Thermoproteus neutrophilus).